The sequence spans 188 residues: Probable chemoreceptor glutamine deamidase CheD (188 aa).

Belongs to the CheD family.

The enzyme catalyses L-glutaminyl-[protein] + H2O = L-glutamyl-[protein] + NH4(+). Its function is as follows. Probably deamidates glutamine residues to glutamate on methyl-accepting chemotaxis receptors (MCPs), playing an important role in chemotaxis. The chain is Probable chemoreceptor glutamine deamidase CheD from Caulobacter sp. (strain K31).